A 274-amino-acid polypeptide reads, in one-letter code: Rhamnulose-1-phosphate aldolase (274 aa).

E117 is a catalytic residue. 3 residues coordinate Zn(2+): H141, H143, and H212.

The protein belongs to the aldolase class II family. RhaD subfamily. Homotetramer. Zn(2+) is required as a cofactor.

Its subcellular location is the cytoplasm. It carries out the reaction L-rhamnulose 1-phosphate = (S)-lactaldehyde + dihydroxyacetone phosphate. The protein operates within carbohydrate degradation; L-rhamnose degradation; glycerone phosphate from L-rhamnose: step 3/3. In terms of biological role, catalyzes the reversible cleavage of L-rhamnulose-1-phosphate to dihydroxyacetone phosphate (DHAP) and L-lactaldehyde. This Pectobacterium atrosepticum (strain SCRI 1043 / ATCC BAA-672) (Erwinia carotovora subsp. atroseptica) protein is Rhamnulose-1-phosphate aldolase.